We begin with the raw amino-acid sequence, 351 residues long: DNA-directed RNA polymerase subunit alpha (351 aa).

An alpha N-terminal domain (alpha-NTD) region spans residues 1 to 236; it reads MSVNTKNWQE…DQLTLFVHFE (236 aa). An alpha C-terminal domain (alpha-CTD) region spans residues 256–351; it reads DDANQLNRYL…AKKLEQELLG (96 aa).

It belongs to the RNA polymerase alpha chain family. Homodimer. The RNAP catalytic core consists of 2 alpha, 1 beta, 1 beta' and 1 omega subunit. When a sigma factor is associated with the core the holoenzyme is formed, which can initiate transcription.

The catalysed reaction is RNA(n) + a ribonucleoside 5'-triphosphate = RNA(n+1) + diphosphate. Functionally, DNA-dependent RNA polymerase catalyzes the transcription of DNA into RNA using the four ribonucleoside triphosphates as substrates. This is DNA-directed RNA polymerase subunit alpha from Erythrobacter litoralis (strain HTCC2594).